The chain runs to 498 residues: ATP synthase subunit beta, chloroplastic (498 aa).

172–179 contacts ATP; the sequence is GGAGVGKT.

Belongs to the ATPase alpha/beta chains family. F-type ATPases have 2 components, CF(1) - the catalytic core - and CF(0) - the membrane proton channel. CF(1) has five subunits: alpha(3), beta(3), gamma(1), delta(1), epsilon(1). CF(0) has four main subunits: a(1), b(1), b'(1) and c(9-12).

It localises to the plastid. It is found in the chloroplast thylakoid membrane. It carries out the reaction ATP + H2O + 4 H(+)(in) = ADP + phosphate + 5 H(+)(out). Functionally, produces ATP from ADP in the presence of a proton gradient across the membrane. The catalytic sites are hosted primarily by the beta subunits. The protein is ATP synthase subunit beta, chloroplastic of Nicotiana sp. (Tobacco).